Reading from the N-terminus, the 227-residue chain is UPF0758 protein Spro_4842 (227 aa).

In terms of domain architecture, MPN spans 105 to 227; that stretch reads AMLNPRMTQH…CVSFAERGWL (123 aa). Positions 176, 178, and 189 each coordinate Zn(2+). The JAMM motif motif lies at 176–189; sequence HNHPSGKAEPSHAD.

Belongs to the UPF0758 family. YicR subfamily.

The sequence is that of UPF0758 protein Spro_4842 from Serratia proteamaculans (strain 568).